Here is a 467-residue protein sequence, read N- to C-terminus: UDP-N-acetylmuramoylalanine--D-glutamate ligase (467 aa).

121–127 lines the ATP pocket; it reads GTNGKST.

The protein belongs to the MurCDEF family.

It is found in the cytoplasm. It carries out the reaction UDP-N-acetyl-alpha-D-muramoyl-L-alanine + D-glutamate + ATP = UDP-N-acetyl-alpha-D-muramoyl-L-alanyl-D-glutamate + ADP + phosphate + H(+). The protein operates within cell wall biogenesis; peptidoglycan biosynthesis. Cell wall formation. Catalyzes the addition of glutamate to the nucleotide precursor UDP-N-acetylmuramoyl-L-alanine (UMA). The sequence is that of UDP-N-acetylmuramoylalanine--D-glutamate ligase from Chelativorans sp. (strain BNC1).